The primary structure comprises 160 residues: Lymphocyte antigen 96 (160 aa).

Positions 1 to 18 (MLPFLFFSTLFSSIFTEA) are cleaved as a signal peptide. Intrachain disulfides connect C25/C51, C37/C148, and C95/C105. Residue N26 is glycosylated (N-linked (GlcNAc...) asparagine). Residue N114 is glycosylated (N-linked (GlcNAc...) asparagine). The interval 119–123 (FSFKG) is interaction with lipopolysaccharide.

As to quaternary structure, heterogeneous homomer formed from homodimers; disulfide-linked. Belongs to the lipopolysaccharide (LPS) receptor, a multi-protein complex containing at least CD14, LY96 and TLR4. Binds to the extracellular domains of TLR2 and TLR4. Ligand binding induces interaction with TLR4 and oligomerization of the complex. Post-translationally, N-glycosylated; high-mannose.

Its subcellular location is the secreted. It localises to the extracellular space. Binds bacterial lipopolysaccharide (LPS). Cooperates with TLR4 in the innate immune response to bacterial lipopolysaccharide (LPS), and with TLR2 in the response to cell wall components from Gram-positive and Gram-negative bacteria. Enhances TLR4-dependent activation of NF-kappa-B. Cells expressing both LY96 and TLR4, but not TLR4 alone, respond to LPS. This Homo sapiens (Human) protein is Lymphocyte antigen 96 (LY96).